Consider the following 297-residue polypeptide: Alarmin release inhibitor (297 aa).

N107, N175, and N190 each carry an N-linked (GlcNAc...) asparagine glycan. The region spanning 151-211 (TYDPTPNTPT…WVPTLGVCPK (61 aa)) is the Sushi domain. An intrachain disulfide couples C183 to C209.

As to quaternary structure, interacts with mouse IL33 (in reduced form).

It localises to the secreted. The protein localises to the host nucleus. Secreted protein which suppresses the host allergic response by inhibiting the interaction of host IL33 with its receptor in order to maintain parasitic infection. Binds to both host IL33 and host nuclear DNA and this dual binding blocks the interaction of IL33 with its receptor, and tethers IL33 within necrotic cells, preventing its release, and blocking allergic response initiation. The chain is Alarmin release inhibitor from Heligmosomoides polygyrus (Parasitic roundworm).